The chain runs to 431 residues: Tol-Pal system protein TolB (431 aa).

A signal peptide spans 1 to 26 (MSLMTKLGFRALVASCLIAAGSAANA). The disordered stretch occupies residues 411 to 431 (PQILSVQGGSVREPSWGPFMQ).

The protein belongs to the TolB family. The Tol-Pal system is composed of five core proteins: the inner membrane proteins TolA, TolQ and TolR, the periplasmic protein TolB and the outer membrane protein Pal. They form a network linking the inner and outer membranes and the peptidoglycan layer.

The protein localises to the periplasm. Its function is as follows. Part of the Tol-Pal system, which plays a role in outer membrane invagination during cell division and is important for maintaining outer membrane integrity. This Burkholderia multivorans (strain ATCC 17616 / 249) protein is Tol-Pal system protein TolB.